Consider the following 364-residue polypeptide: ERCC4 domain-containing protein EP364R (364 aa).

The 100-residue stretch at 3–102 (FLVADHREHH…QLYFFVEGPA (100 aa)) folds into the ERCC4 domain. Residues 319–328 (ASRPATQPAA) show a composition bias toward polar residues. The disordered stretch occupies residues 319 to 352 (ASRPATQPAATQPLHEVSDDATSNASDTSSPIGH). Residues 338–348 (DATSNASDTSS) are compositionally biased toward low complexity.

Belongs to the asfivirus EP364R family.

Its function is as follows. Plays a role in the inhibition of type I interferon signaling pathway. Mechanistically, specifically interacts with 2',3'-cGAMP and cleaves it via its phosphodiesterase activity. In turn, prevents 2',3'-cGAMP interaction with host ER-resident STING1 leading to inhibition of downstream signaling pathway and type I interferon production. The sequence is that of ERCC4 domain-containing protein EP364R from African swine fever virus (strain Badajoz 1971 Vero-adapted) (Ba71V).